Reading from the N-terminus, the 106-residue chain is ATP-dependent Clp protease adapter protein ClpS (106 aa).

The protein belongs to the ClpS family. In terms of assembly, binds to the N-terminal domain of the chaperone ClpA.

Functionally, involved in the modulation of the specificity of the ClpAP-mediated ATP-dependent protein degradation. The chain is ATP-dependent Clp protease adapter protein ClpS from Nocardia farcinica (strain IFM 10152).